The primary structure comprises 89 residues: MIDRKHYHLVGSIGKDILNNGKLPALLLIAVLASSSLVVITTYQTRRLTVEREQLLLEQNILDIEWRNLILEDNVISDQSRFEFVATEQ.

Residues 1 to 22 lie on the Cytoplasmic side of the membrane; it reads MIDRKHYHLVGSIGKDILNNGK. Residues 23–40 traverse the membrane as a helical segment; it reads LPALLLIAVLASSSLVVI. Residues 41–89 lie on the Periplasmic side of the membrane; that stretch reads TTYQTRRLTVEREQLLLEQNILDIEWRNLILEDNVISDQSRFEFVATEQ.

The protein belongs to the FtsL family. In terms of assembly, part of a complex composed of FtsB, FtsL and FtsQ.

Its subcellular location is the cell inner membrane. In terms of biological role, essential cell division protein. May link together the upstream cell division proteins, which are predominantly cytoplasmic, with the downstream cell division proteins, which are predominantly periplasmic. This Moranella endobia (strain PCIT) protein is Cell division protein FtsL.